A 224-amino-acid chain; its full sequence is Thiamine-triphosphatase (224 aa).

Ala2 is subject to N-acetylalanine. A CYTH domain is found at 5-201 (LIEVERKFTP…AKLLVYLQRF (197 aa)). 2 residues coordinate Mg(2+): Glu7 and Glu9. 5 residues coordinate substrate: Lys11, Arg55, Arg57, Lys65, and Arg125. 3 residues coordinate Mg(2+): Asp145, Glu157, and Glu159. Glu157 is a substrate binding site. Lys193 contributes to the substrate binding site.

The protein belongs to the ThTPase family. As to quaternary structure, monomer. Mg(2+) serves as cofactor.

The protein resides in the cytoplasm. It carries out the reaction thiamine triphosphate + H2O = thiamine diphosphate + phosphate + H(+). Hydrolase highly specific for thiamine triphosphate (ThTP). In Rattus norvegicus (Rat), this protein is Thiamine-triphosphatase (Thtpa).